A 969-amino-acid chain; its full sequence is Isoleucine--tRNA ligase (969 aa).

The short motif at 68-78 is the 'HIGH' region element; the sequence is PYANGNLHMGH. An L-isoleucyl-5'-AMP-binding site is contributed by Glu584. A 'KMSKS' region motif is present at residues 625 to 629; it reads KMSKS. ATP is bound at residue Lys628. 4 residues coordinate Zn(2+): Cys938, Cys941, Cys958, and Cys961.

The protein belongs to the class-I aminoacyl-tRNA synthetase family. IleS type 1 subfamily. Monomer. The cofactor is Zn(2+).

It is found in the cytoplasm. The catalysed reaction is tRNA(Ile) + L-isoleucine + ATP = L-isoleucyl-tRNA(Ile) + AMP + diphosphate. In terms of biological role, catalyzes the attachment of isoleucine to tRNA(Ile). As IleRS can inadvertently accommodate and process structurally similar amino acids such as valine, to avoid such errors it has two additional distinct tRNA(Ile)-dependent editing activities. One activity is designated as 'pretransfer' editing and involves the hydrolysis of activated Val-AMP. The other activity is designated 'posttransfer' editing and involves deacylation of mischarged Val-tRNA(Ile). The sequence is that of Isoleucine--tRNA ligase from Prochlorococcus marinus (strain SARG / CCMP1375 / SS120).